We begin with the raw amino-acid sequence, 456 residues long: Alcohol acyl transferase 1 allele GSc (456 aa).

Active-site proton acceptor residues include His165 and Asn386.

It belongs to the plant acyltransferase family. Expressed at very low levels in the skin of ripe fruit.

Its function is as follows. Involved in the biosynthesis of volatile esters which confer ripe apple fruit flavor. Alcohol acyl transferase that can use a wide range of alcohols as substrate to produce esters. This Malus domestica (Apple) protein is Alcohol acyl transferase 1 allele GSc.